Consider the following 153-residue polypeptide: Acetylacetone-cleaving enzyme (153 aa).

Homotetramer. Requires Fe cation as cofactor.

The enzyme catalyses acetylacetone + O2 = methylglyoxal + acetate + H(+). It participates in xenobiotic degradation; acetylacetone degradation. Its function is as follows. Cleaves acetylacetone to equimolar amounts of methylglyoxal and acetate, consuming one equivalent of molecular oxygen. This is Acetylacetone-cleaving enzyme (dke1) from Acinetobacter johnsonii.